Consider the following 273-residue polypeptide: Dermonecrotic toxin LspaSicTox-alphaIA1ii (273 aa).

The active site involves histidine 5. 2 residues coordinate Mg(2+): glutamate 25 and aspartate 27. Histidine 41 acts as the Nucleophile in catalysis. Cystine bridges form between cysteine 45/cysteine 51 and cysteine 47/cysteine 190. Aspartate 85 lines the Mg(2+) pocket.

The protein belongs to the arthropod phospholipase D family. Class II subfamily. The cofactor is Mg(2+). As to expression, expressed by the venom gland.

The protein resides in the secreted. It catalyses the reaction an N-(acyl)-sphingosylphosphocholine = an N-(acyl)-sphingosyl-1,3-cyclic phosphate + choline. It carries out the reaction an N-(acyl)-sphingosylphosphoethanolamine = an N-(acyl)-sphingosyl-1,3-cyclic phosphate + ethanolamine. The enzyme catalyses a 1-acyl-sn-glycero-3-phosphocholine = a 1-acyl-sn-glycero-2,3-cyclic phosphate + choline. The catalysed reaction is a 1-acyl-sn-glycero-3-phosphoethanolamine = a 1-acyl-sn-glycero-2,3-cyclic phosphate + ethanolamine. Functionally, dermonecrotic toxins cleave the phosphodiester linkage between the phosphate and headgroup of certain phospholipids (sphingolipid and lysolipid substrates), forming an alcohol (often choline) and a cyclic phosphate. This toxin acts on sphingomyelin (SM). It may also act on ceramide phosphoethanolamine (CPE), lysophosphatidylcholine (LPC) and lysophosphatidylethanolamine (LPE), but not on lysophosphatidylserine (LPS), and lysophosphatidylglycerol (LPG). It acts by transphosphatidylation, releasing exclusively cyclic phosphate products as second products. Induces dermonecrosis, hemolysis, increased vascular permeability, edema, inflammatory response, and platelet aggregation. The chain is Dermonecrotic toxin LspaSicTox-alphaIA1ii from Loxosceles spadicea (Recluse spider).